The primary structure comprises 271 residues: ATP synthase subunit delta (271 aa).

The protein belongs to the ATPase delta chain family. As to quaternary structure, F-type ATPases have 2 components, F(1) - the catalytic core - and F(0) - the membrane proton channel. F(1) has five subunits: alpha(3), beta(3), gamma(1), delta(1), epsilon(1). F(0) has three main subunits: a(1), b(2) and c(10-14). The alpha and beta chains form an alternating ring which encloses part of the gamma chain. F(1) is attached to F(0) by a central stalk formed by the gamma and epsilon chains, while a peripheral stalk is formed by the delta and b chains.

Its subcellular location is the cell membrane. In terms of biological role, f(1)F(0) ATP synthase produces ATP from ADP in the presence of a proton or sodium gradient. F-type ATPases consist of two structural domains, F(1) containing the extramembraneous catalytic core and F(0) containing the membrane proton channel, linked together by a central stalk and a peripheral stalk. During catalysis, ATP synthesis in the catalytic domain of F(1) is coupled via a rotary mechanism of the central stalk subunits to proton translocation. Functionally, this protein is part of the stalk that links CF(0) to CF(1). It either transmits conformational changes from CF(0) to CF(1) or is implicated in proton conduction. This Streptomyces griseus subsp. griseus (strain JCM 4626 / CBS 651.72 / NBRC 13350 / KCC S-0626 / ISP 5235) protein is ATP synthase subunit delta.